The primary structure comprises 671 residues: DNA ligase (671 aa).

NAD(+) contacts are provided by residues 32 to 36 (DAEYD), 81 to 82 (SL), and Glu-113. The N6-AMP-lysine intermediate role is filled by Lys-115. Residues Arg-136, Glu-173, Lys-290, and Lys-314 each contribute to the NAD(+) site. The Zn(2+) site is built by Cys-408, Cys-411, Cys-426, and Cys-432. The BRCT domain maps to 593 to 671 (EIDSPFAGKT…EAEMMRLLGE (79 aa)).

This sequence belongs to the NAD-dependent DNA ligase family. LigA subfamily. Requires Mg(2+) as cofactor. It depends on Mn(2+) as a cofactor.

The catalysed reaction is NAD(+) + (deoxyribonucleotide)n-3'-hydroxyl + 5'-phospho-(deoxyribonucleotide)m = (deoxyribonucleotide)n+m + AMP + beta-nicotinamide D-nucleotide.. Functionally, DNA ligase that catalyzes the formation of phosphodiester linkages between 5'-phosphoryl and 3'-hydroxyl groups in double-stranded DNA using NAD as a coenzyme and as the energy source for the reaction. It is essential for DNA replication and repair of damaged DNA. The chain is DNA ligase from Klebsiella pneumoniae (strain 342).